Consider the following 217-residue polypeptide: Probable GTP-binding protein EngB (217 aa).

The 185-residue stretch at 33-217 folds into the EngB-type G domain; the sequence is GPAEIAFAGR…RITIEQAVAR (185 aa). Residues 41–48, 68–72, 95–98, 162–165, and 196–198 each bind GTP; these read GRSNVGKS, GRTQE, DMPG, TKTD, and TSS. The Mg(2+) site is built by serine 48 and threonine 70.

Belongs to the TRAFAC class TrmE-Era-EngA-EngB-Septin-like GTPase superfamily. EngB GTPase family. It depends on Mg(2+) as a cofactor.

Its function is as follows. Necessary for normal cell division and for the maintenance of normal septation. The sequence is that of Probable GTP-binding protein EngB from Sinorhizobium fredii (strain NBRC 101917 / NGR234).